The primary structure comprises 56 residues: Large ribosomal subunit protein bL32 (56 aa).

Positions Met-1–Arg-16 are enriched in basic residues. The tract at residues Met-1–Ala-21 is disordered.

Belongs to the bacterial ribosomal protein bL32 family.

This Vibrio atlanticus (strain LGP32) (Vibrio splendidus (strain Mel32)) protein is Large ribosomal subunit protein bL32.